The following is a 444-amino-acid chain: Transcriptional regulatory protein GlrR (444 aa).

Positions 7-121 (HLLLVDDDPG…ALYQAIDDAL (115 aa)) constitute a Response regulatory domain. Asp-56 is modified (4-aspartylphosphate). In terms of domain architecture, Sigma-54 factor interaction spans 136-366 (IVTRSPLMLR…VNVIEQCVAL (231 aa)). Residues 164–171 (GQSGTGKE) and 227–236 (AEGGTLFLDE) contribute to the ATP site. Positions 414–433 (VTHAARMAGRNRTEFYKLLS) form a DNA-binding region, H-T-H motif.

Post-translationally, phosphorylated by GlrK.

It is found in the cytoplasm. Its function is as follows. Member of the two-component regulatory system GlrR/GlrK that up-regulates transcription of the glmY sRNA when cells enter the stationary growth phase. Regulates glmY transcription by binding to three conserved sites in the purL-glmY intergenic region. The sequence is that of Transcriptional regulatory protein GlrR (glrR) from Escherichia coli (strain K12).